We begin with the raw amino-acid sequence, 181 residues long: Ubiquitin-like protein 4B (181 aa).

The region spanning 1–76 (MWLTVKLLLG…LNVIIRPLEK (76 aa)) is the Ubiquitin-like domain. The interval 139-181 (PEGKHSGATGSTRESKGDMEPRRNMKCNLAHKDGFKREKSPGK) is disordered. 2 stretches are compositionally biased toward basic and acidic residues: residues 151 to 161 (RESKGDMEPRR) and 168 to 181 (AHKD…SPGK).

The protein localises to the cytoplasm. The sequence is that of Ubiquitin-like protein 4B (UBL4B) from Monodelphis domestica (Gray short-tailed opossum).